A 760-amino-acid polypeptide reads, in one-letter code: Catecholate siderophore receptor Fiu (760 aa).

The first 31 residues, 1–31 (MENNRNFPARQFHSLTFFAGLCIGITPVAQA), serve as a signal peptide directing secretion. The TBDR plug domain occupies 67–175 (PVADTTRTMT…PTGSINMISK (109 aa)). The TBDR beta-barrel domain occupies 180 to 760 (DSGIDASASI…TFLLTANMHF (581 aa)). A TonB C-terminal box motif is present at residues 743 to 760 (RYHPGEPRTFLLTANMHF).

Belongs to the TonB-dependent receptor family.

It localises to the cell outer membrane. In terms of biological role, involved in the active transport across the outer membrane of iron complexed with catecholate siderophores such as dihydroxybenzoylserine and dihydroxybenzoate. It derives its energy for transport by interacting with the trans-periplasmic membrane protein TonB. Can also transport catechol-substituted cephalosporins. Receptor for microcins M, H47 and E492. This Escherichia coli (strain K12) protein is Catecholate siderophore receptor Fiu (fiu).